A 339-amino-acid chain; its full sequence is tRNA N6-adenosine threonylcarbamoyltransferase (339 aa).

Positions 111 and 115 each coordinate Fe cation. Substrate is bound by residues 139–143 (LVSGG), Asp172, Gly185, Asp189, and Asn280. Asp308 lines the Fe cation pocket.

Belongs to the KAE1 / TsaD family. Requires Fe(2+) as cofactor.

The protein resides in the cytoplasm. It catalyses the reaction L-threonylcarbamoyladenylate + adenosine(37) in tRNA = N(6)-L-threonylcarbamoyladenosine(37) in tRNA + AMP + H(+). Required for the formation of a threonylcarbamoyl group on adenosine at position 37 (t(6)A37) in tRNAs that read codons beginning with adenine. Is involved in the transfer of the threonylcarbamoyl moiety of threonylcarbamoyl-AMP (TC-AMP) to the N6 group of A37, together with TsaE and TsaB. TsaD likely plays a direct catalytic role in this reaction. This chain is tRNA N6-adenosine threonylcarbamoyltransferase, found in Bacteroides fragilis (strain ATCC 25285 / DSM 2151 / CCUG 4856 / JCM 11019 / LMG 10263 / NCTC 9343 / Onslow / VPI 2553 / EN-2).